The primary structure comprises 609 residues: 2',5'-phosphodiesterase 12 (609 aa).

A mitochondrion-targeting transit peptide spans 1–16; the sequence is MWRLPGVRAALRGVRT. The segment at 203–231 is disordered; it reads PRAAEPEGGGPSSSSPSSPSPGWTETGVD. Over residues 214–224 the composition is skewed to low complexity; the sequence is SSSSPSSPSPG. Residue S217 is modified to Phosphoserine. Mg(2+) is bound by residues E351, D496, and N498. The active-site Proton donor/acceptor is the D496.

Belongs to the CCR4/nocturin family. Mg(2+) serves as cofactor. Liver.

Its subcellular location is the mitochondrion matrix. The enzyme catalyses Exonucleolytic cleavage of poly(A) to 5'-AMP.. Its function is as follows. Enzyme that cleaves 2',5'-phosphodiester bond linking adenosines of the 5'-triphosphorylated oligoadenylates, triphosphorylated oligoadenylates referred as 2-5A modulates the 2-5A system. Degrades triphosphorylated 2-5A to produce AMP and ATP. Also cleaves 3',5'-phosphodiester bond of oligoadenylates. Plays a role as a negative regulator of the 2-5A system that is one of the major pathways for antiviral and antitumor functions induced by interferons (IFNs). Suppression of this enzyme increases cellular 2-5A levels and decreases viral replication in cultured small-airway epithelial cells. The sequence is that of 2',5'-phosphodiesterase 12 (PDE12) from Bos taurus (Bovine).